Consider the following 901-residue polypeptide: HTH-type transcriptional regulator MalT (901 aa).

Ser39–Thr46 provides a ligand contact to ATP. The HTH luxR-type domain maps to Glu829 to Leu894. The segment at residues Asn853–Arg872 is a DNA-binding region (H-T-H motif).

It belongs to the MalT family. In terms of assembly, monomer in solution. Oligomerizes to an active state in the presence of the positive effectors ATP and maltotriose.

With respect to regulation, activated by ATP and maltotriose, which are both required for DNA binding. Its function is as follows. Positively regulates the transcription of the maltose regulon whose gene products are responsible for uptake and catabolism of malto-oligosaccharides. Specifically binds to the promoter region of its target genes, recognizing a short DNA motif called the MalT box. This Cronobacter sakazakii (strain ATCC BAA-894) (Enterobacter sakazakii) protein is HTH-type transcriptional regulator MalT.